The primary structure comprises 748 residues: MGKKKNSNKSAAAAPAVKHNDRWSSIELGEAKSAAVSHYKEPSKEPKFVHPAKLEKVKRIHDGLNIDRVLSHGPVPKQNGGTKRKHVEVTTQKLENKKPKVEVKKEDEKSKNKKMKNQNKHTALVQNETSTRSTYFVEEPDNENKVTLISNGREIAFKKTEVVESDDEQMIGLDSDEELEDEDETDIDEDEMMIDPKDIERYINFESVEDEEDMEDEEIEDEEFEDEEFEDEEEEADEQEEEEEDVSDEESVVSEMDADSDDEGFIAGKDREAHVISKDKFTRNAPAVDFDKFPFTDEDSVVTSSRAFGFMISPCDVQTFFDKFYQSNVLVVRRKQPTYFGNLFSTARLGELLEKNHLEYGRNINIAQYKNGVRTTLNGQGRAYPQIVKQHLHNMCSVQLVNPQTYDDRIWYLCEVIQEQFGCFVGANTYLTPAGSSGFAPHWDEIDAFLLQVEGRKYWRVWAPESAEEELPLESSDNFTEDDMKGREPVFEGWIEKGDMIYIPRGYIHQARTDSKVHSLHVTVSTGRQWSFANLMEKVVPEAIGVLTDTRHKLRRGLPTGLFDMGGVIDLDYSQEDHFVEKFKMVVDRHMSMLRNLVADQLLESSVDSLAKEFMKQALPPRLTEQEKKLSVLGSSTNLLGDDLVDFTARTKVRLIRRHTQRLLMESEDACFISHRINNSRLFEGRPEQIVEYPISGIDAYRVLSNSYPEWRTLYEIFSLRETKTKSRKENLAAIQLLFQIGVLLVKN.

Disordered stretches follow at residues asparagine 65–tyrosine 135 and threonine 160–glycine 264. Residues leucine 94–serine 110 show a composition bias toward basic and acidic residues. Residues leucine 124–threonine 134 are compositionally biased toward polar residues. Acidic residues predominate over residues valine 163–methionine 193. Basic and acidic residues predominate over residues isoleucine 194–isoleucine 203. Residues serine 207 to glycine 264 show a composition bias toward acidic residues. In terms of domain architecture, JmjC spans glutamine 399–alanine 543. Fe cation contacts are provided by histidine 442, aspartate 444, and histidine 509.

It belongs to the ROX family. NO66 subfamily. The cofactor is Fe(2+).

The protein localises to the nucleus. It carries out the reaction N(6),N(6)-dimethyl-L-lysyl(36)-[histone H3] + 2 2-oxoglutarate + 2 O2 = L-lysyl(36)-[histone H3] + 2 formaldehyde + 2 succinate + 2 CO2. Oxygenase that can act as both a histone lysine demethylase and a ribosomal histidine hydroxylase. Specifically demethylates 'Lys-4' (H3K4me) and 'Lys-36' (H3K36me) of histone H3, thereby playing a central role in histone code. Mediates response to multiple stress stimuli, including heat shock and osmotic, oxidative, and ethanol stress. In Caenorhabditis elegans, this protein is Bifunctional lysine-specific demethylase and histidyl-hydroxylase NO66 (jmjc-1).